The sequence spans 401 residues: L-rhamnonate dehydratase (401 aa).

2 residues coordinate substrate: H29 and R55. Mg(2+)-binding residues include D222, E248, and E276. The active-site Proton acceptor is H325. E345 is a binding site for substrate.

This sequence belongs to the mandelate racemase/muconate lactonizing enzyme family. RhamD subfamily. As to quaternary structure, homooctamer; tetramer of dimers. It depends on Mg(2+) as a cofactor.

The catalysed reaction is L-rhamnonate = 2-dehydro-3-deoxy-L-rhamnonate + H2O. Catalyzes the dehydration of L-rhamnonate to 2-keto-3-deoxy-L-rhamnonate (KDR). The sequence is that of L-rhamnonate dehydratase from Tolumonas auensis (strain DSM 9187 / NBRC 110442 / TA 4).